The following is a 385-amino-acid chain: Centrosomal protein of 44 kDa (385 aa).

A binds with microtubules and centrioles region spans residues 11-192 (RNLEQVLRSL…GANIPEDTVT (182 aa)). The interval 126 to 154 (LEKTPSQQRKKTSSAKSEPCSSTEKTSTE) is disordered. Residues 139–154 (SAKSEPCSSTEKTSTE) are compositionally biased toward polar residues. A coiled-coil region spans residues 230-271 (EVTALQSMLAECQEKLKKLTCIESRLESLEEKMKGKVLVNEK). Residues 303–348 (SEDYSSSSDMDSLNPDRKSKEERHANIPLSSGYSTVSSDSTPRTST) form a disordered region. Positions 305–314 (DYSSSSDMDS) are enriched in low complexity. Basic and acidic residues predominate over residues 316–327 (NPDRKSKEERHA). The segment covering 332–342 (SSGYSTVSSDS) has biased composition (low complexity). Serine 342 carries the post-translational modification Phosphoserine. Threonine 343 is subject to Phosphothreonine. Residues 358-381 (SEETTMQKMERMKKMFEETAELLK) adopt a coiled-coil conformation.

In terms of assembly, interacts with CROCC. Interacts with POC1B; the interaction is direct and recruits POC1B to centriolar microtubules. Binds to centriolar microtubules.

It is found in the cytoplasm. It localises to the cytoskeleton. Its subcellular location is the microtubule organizing center. The protein resides in the centrosome. The protein localises to the centriole. It is found in the spindle pole. It localises to the midbody. In terms of biological role, centriole-enriched microtubule-binding protein involved in centriole biogenesis. In collaboration with CEP295 and POC1B, is required for the centriole-to-centrosome conversion by ensuring the formation of bona fide centriole wall. Functions as a linker component that maintains centrosome cohesion. Associates with CROCC and regulates its stability and localization to the centrosome. This Bos taurus (Bovine) protein is Centrosomal protein of 44 kDa (CEP44).